Consider the following 448-residue polypeptide: Neurexin-1b-beta (448 aa).

The N-terminal stretch at 1–38 (MFGGWRLVVWQIFSEIITRRLGFWICLYFAALSVGMIS) is a signal peptide. Over 39–375 (GSEPLVRTRH…EVFRESNGTT (337 aa)) the chain is Extracellular. The region spanning 71–269 (STYVFGRQGG…DPNVRMEGSV (199 aa)) is the Laminin G-like domain. The helical transmembrane segment at 376–396 (GMVVGIVAGAALCILILLYAM) threads the bilayer. At 397-448 (YKYRNRDEGSYHVDESRNYICNSNGAALKEKNTADDDSGSKSKKNKNKEYYV) the chain is on the cytoplasmic side. Over residues 426 to 436 (EKNTADDDSGS) the composition is skewed to basic and acidic residues. The tract at residues 426 to 448 (EKNTADDDSGSKSKKNKNKEYYV) is disordered.

This sequence belongs to the neurexin family.

The protein resides in the membrane. Functionally, neuronal cell surface protein that may be involved in cell recognition and cell adhesion. May play a role in formation or maintenance of synaptic junctions. The sequence is that of Neurexin-1b-beta (nrxn1b) from Danio rerio (Zebrafish).